The primary structure comprises 510 residues: Leucine-rich repeat-containing protein 14B (510 aa).

Residues 100 to 137 (SNRLRVADFTGIQDVQVQQCPCGRALGRWGRTKVLART) form an LRR 1; degenerate repeat. The LRR 2; degenerate repeat unit spans residues 181–205 (QVCCPSLRADSLSPGQLLQVLGLAG). One copy of the LRR 4; degenerate repeat lies at 234-273 (FPQLTSLTLPTKAFDAPPTCAPDPEGEDLLLTSIAWELSQ). 5 LRR repeats span residues 274–298 (MNQLTELSVAFSTLTGKIQTLLSPL), 299–330 (KTPLRVLDLANCALNHEDISFLADCNHTAHLE), 331–349 (VLDLSGHNLVHLYPSTFFR), 355–382 (AQTLRVLTLEECNITDSHVNMMILGLSP), and 383–407 (CSQLQQFKFLGNPLSGSALRRLFAA).

It belongs to the PRAME family. LRRC14 subfamily.

The polypeptide is Leucine-rich repeat-containing protein 14B (Mus musculus (Mouse)).